The sequence spans 65 residues: Antimicrobial peptide THP1 (65 aa).

A signal peptide spans 1-25 (MRIVYLLFPFILLLAQGAAGSSLAL). Cystine bridges form between Cys31–Cys53, Cys38–Cys59, and Cys43–Cys60. Residues 61–65 (KTLLG) constitute a propeptide that is removed on maturation.

It belongs to the beta-defensin family.

Its subcellular location is the secreted. Bactericidal activity; inhibits S.aureus and E.coli. The polypeptide is Antimicrobial peptide THP1 (Meleagris gallopavo (Wild turkey)).